Reading from the N-terminus, the 82-residue chain is Beta-insect depressant toxin LqqIT2 (82 aa).

The N-terminal stretch at 1 to 21 is a signal peptide; it reads MKLLLLLIVSASMLIESLVNA. In terms of domain architecture, LCN-type CS-alpha/beta spans 22 to 82; it reads DGYIRKRDGC…TWKSETNTCG (61 aa). Intrachain disulfides connect C31–C81, C35–C56, C42–C63, and C46–C65.

The protein belongs to the long (4 C-C) scorpion toxin superfamily. Sodium channel inhibitor family. Beta subfamily. Expressed by the venom gland.

The protein localises to the secreted. Depressant insect beta-toxins cause a transient contraction paralysis followed by a slow flaccid paralysis. They bind voltage-independently at site-4 of sodium channels and shift the voltage of activation toward more negative potentials thereby affecting sodium channel activation and promoting spontaneous and repetitive firing. Aside from typical beta-toxin effects, this toxin also affects the inactivation process and ion selectivity of the insect voltage-gated sodium channel. This toxin is active only on insects. Is active on the insect voltage-gated sodium channel para. In vivo, when injected intraperitoneally, it exhibits analgesic activity, increasing hot plate and tail flick withdrawal latencies in a dose-dependent fashion. This phenomenon might be partly due to an inhibitory mechanism activated by noxious stimuli. In Leiurus quinquestriatus quinquestriatus (Egyptian scorpion), this protein is Beta-insect depressant toxin LqqIT2.